We begin with the raw amino-acid sequence, 79 residues long: Short neurotoxin 1/5 (79 aa).

The N-terminal stretch at 1–21 (MKTLLLTLVMVTIMCLDLGYT) is a signal peptide. 4 disulfides stabilise this stretch: C24-C41, C34-C59, C63-C71, and C72-C77.

It belongs to the three-finger toxin family. Short-chain subfamily. Type III alpha-neurotoxin sub-subfamily. In terms of tissue distribution, expressed by the venom gland.

The protein resides in the secreted. Functionally, binds with high affinity to muscle nicotinic acetylcholine receptor (nAChR) and inhibit acetylcholine from binding to the receptor, thereby impairing neuromuscular transmission. Compete with the binding of alpha-bungarotoxin on muscle AChR (from Torpedo) with an IC(50) of 0.31 uM (SNTX1) and 3.1 uM (SNTX5). Is able of exerting muscle paralysis, spasms and increased respiration. The chain is Short neurotoxin 1/5 from Pseudonaja textilis (Eastern brown snake).